Reading from the N-terminus, the 81-residue chain is Insulin (81 aa).

Intrachain disulfides connect C7–C67, C19–C80, and C66–C71. A propeptide spans 33–58 (DVEQPLVNGPLHGEVGELPFQHEEYQ) (c peptide).

The protein belongs to the insulin family. As to quaternary structure, heterodimer of a B chain and an A chain linked by two disulfide bonds.

It is found in the secreted. In terms of biological role, insulin decreases blood glucose concentration. It increases cell permeability to monosaccharides, amino acids and fatty acids. It accelerates glycolysis, the pentose phosphate cycle, and glycogen synthesis in liver. This is Insulin (INS) from Anas platyrhynchos (Mallard).